The primary structure comprises 668 residues: Spartin (668 aa).

Met1 is modified (N-acetylmethionine). Positions 16-94 constitute an MIT domain; sequence IKEAYKKAFV…LQNVRTRLEI (79 aa). The interval 110–176 is disordered; sequence VPKLYPEFPP…PSEAPPAYTP (67 aa). A compositionally biased stretch (basic and acidic residues) spans 118 to 127; it reads PPKDMSEKSP. Ser126 bears the Phosphoserine mark. Residues 128-162 are compositionally biased toward low complexity; the sequence is EPQSLSSLPQHSEVNGSTSTASAESSSTPTTLSLP. A ubiquitin-binding region (UBR) domain region spans residues 190 to 380; the sequence is ESGEFSSVGE…QLDPSSKDVR (191 aa). The short motif at 193 to 200 is the LC3-interacting region (LIR); mediates interaction with MAP1LC3A AND MAP1LC3C element; sequence EFSSVGEN. The segment at 348-396 is disordered; it reads FQIPGISGSASDQLKEASGTDVRQLDPSSKDVRQKGKRGKKTKGTSSEE. Residue Lys362 forms a Glycyl lysine isopeptide (Lys-Gly) (interchain with G-Cter in ubiquitin) linkage. Positions 427–611 constitute a Senescence domain; the sequence is ILSGASWVSW…YNIDNIGIKA (185 aa). The tract at residues 431–503 is required for localization to lipid droplets; sequence ASWVSWGLVK…LVDGVCTVAN (73 aa). A Phosphoserine modification is found at Ser470. A disordered region spans residues 631 to 668; the sequence is IDNSKGENPGGGASANLKGEKDEQKEGPEKNGAKKKDK. Residues 648 to 668 show a composition bias toward basic and acidic residues; the sequence is KGEKDEQKEGPEKNGAKKKDK.

Interacts with ITCH and WWP1. Interacts (via MIT domain) with IST1; leading to the recruitment of SPART to midbodies. Interacts with MAP1LC3A and MAP1LC3C. In terms of processing, ubiquitinated; ubiquitination does not require ITCH and WWP1.

The protein localises to the cytoplasm. It localises to the midbody. The protein resides in the lipid droplet. Lipophagy receptor that plays an important role in lipid droplet (LD) turnover in motor neurons. Localizes to LDs and interacts with components of the autophagy machinery, such as MAP1LC3A/C proteins to deliver LDs to autophagosomes for degradation via lipophagy. Lipid transfer protein required for lipid droplet degradation, including by lipophagy. Can bind and transfer all lipid species found in lipid droplets, from phospholipids to triglycerides and sterol esters but the direction of lipid transfer by spartin and its cargos are unknown. May be implicated in endosomal trafficking, or microtubule dynamics, or both. Participates in cytokinesis. The sequence is that of Spartin from Bos taurus (Bovine).